A 243-amino-acid polypeptide reads, in one-letter code: Transcription factor A, mitochondrial (243 aa).

The transit peptide at 1–42 directs the protein to the mitochondrion; it reads MALFRGMWSVLKALGRTGVEMCAGCGGRIPSSISLVCIPKCF. The HMG box 1 DNA-binding region spans 49–117; the sequence is PKKPMSSYLR…AYKEAVSKYK (69 aa). Phosphoserine; by PKA occurs at positions 54, 55, and 60. Lysine 66 carries the N6-succinyllysine modification. Threonine 121 is subject to Phosphothreonine. The segment at residues 154–218 is a DNA-binding region (HMG box 2); sequence PKRPRSAYNI…RYDNEMKSWE (65 aa). Serine 159 bears the Phosphoserine; by PKA mark. A Phosphoserine modification is found at serine 192.

Monomer; binds DNA as a monomer. Homodimer. Component of the mitochondrial transcription initiation complex, composed at least of TFB2M, TFAM and POLRMT. In this complex TFAM recruits POLRMT to the promoter whereas TFB2M induces structural changes in POLRMT to enable promoter opening and trapping of the DNA non-template strand. Upon metabolic stress, forms a complex composed of FOXO3, SIRT3, TFAM and POLRMT. Interacts with TFB1M and TFB2M. Interacts with CLPX; this enhances DNA-binding. In terms of processing, phosphorylation by PKA within the HMG box 1 impairs DNA binding and promotes degradation by the AAA+ Lon protease. In terms of tissue distribution, the mitochondrial isoform is widely expressed while the nuclear isoform is testis-specific.

The protein resides in the mitochondrion. It is found in the mitochondrion matrix. Its subcellular location is the mitochondrion nucleoid. The protein localises to the nucleus. Binds to the mitochondrial light strand promoter and functions in mitochondrial transcription regulation. Component of the mitochondrial transcription initiation complex, composed at least of TFB2M, TFAM and POLRMT that is required for basal transcription of mitochondrial DNA. In this complex, TFAM recruits POLRMT to a specific promoter whereas TFB2M induces structural changes in POLRMT to enable promoter opening and trapping of the DNA non-template strand. Required for accurate and efficient promoter recognition by the mitochondrial RNA polymerase. Promotes transcription initiation from the HSP1 and the light strand promoter by binding immediately upstream of transcriptional start sites. Is able to unwind DNA. Bends the mitochondrial light strand promoter DNA into a U-turn shape via its HMG boxes. Required for maintenance of normal levels of mitochondrial DNA. May play a role in organizing and compacting mitochondrial DNA. Its function is as follows. May also function as a transcriptional activator or may have a structural role in the compaction of nuclear DNA during spermatogenesis. This is Transcription factor A, mitochondrial from Mus musculus (Mouse).